The following is a 770-amino-acid chain: Protein PAT1 homolog 1 (770 aa).

A disordered region spans residues 1–42 (MFRYESLEDCPLDEDEDAFQGLGEEDEEIDQFNDDTFGSGAV). Residues 1-84 (MFRYESLEDC…EMDLLGDHEE (84 aa)) form a region A; interaction with DDX6/RCK region. Positions 1 to 397 (MFRYESLEDC…HRVSHQDHLR (397 aa)) are involved in nuclear foci localization. A compositionally biased stretch (acidic residues) spans 7 to 33 (LEDCPLDEDEDAFQGLGEEDEEIDQFN). The interval 85–388 (NLAERLSKMV…LNGTGDRGGH (304 aa)) is region N; interaction with decapping machinery. The short motif at 86–95 (LAERLSKMVI) is the Nuclear export signal element. Ser-177 carries the post-translational modification Phosphoserine. The residue at position 178 (Thr-178) is a Phosphothreonine. Phosphoserine occurs at positions 179 and 184. A Phosphothreonine modification is found at Thr-194. An asymmetric dimethylarginine mark is found at Arg-217, Arg-223, and Arg-263. The involved in RNA-binding stretch occupies residues 223–397 (RYPAPYGERM…HRVSHQDHLR (175 aa)). Residue Ser-278 is modified to Phosphoserine. Arg-284 carries the asymmetric dimethylarginine modification. Disordered stretches follow at residues 320–341 (SAPP…PHLQ) and 369–394 (QLQS…SHQD). The segment covering 321–337 (APPPATPPPQQHPPGPG) has biased composition (pro residues). Low complexity predominate over residues 369 to 380 (QLQSRNQHRNLN). Residue Arg-385 is modified to Omega-N-methylarginine. Positions 385 to 394 (RGGHRVSHQD) are enriched in basic and acidic residues. The region H stretch occupies residues 389 to 448 (RVSHQDHLRKDPYANLMLQREKDWVSKIQMMQLQSTDPYLDDFYYQNYFEKLEKSSAAEE). The involved in nuclear speckle localization stretch occupies residues 398 to 770 (KDPYANLMLQ…TKLQLVQGMR (373 aa)). Residues 449–770 (MQGDGPKKER…TKLQLVQGMR (322 aa)) form a region C region.

It belongs to the PAT1 family. Interacts (via region A) with DDX6/RCK. Interacts (via region H and region C) with LSM1 and LSM4. Interacts (via region N) with DCP1A, DCP2, EDC3, EDC4 and XRN1. Interacts with the CCR4-NOT complex. Interacts with the Lsm-containing SMN-Sm protein complex. Interacts with EIF4ENIF1/4E-T.

The protein resides in the cytoplasm. It is found in the P-body. Its subcellular location is the nucleus. The protein localises to the PML body. It localises to the nucleus speckle. Functionally, RNA-binding protein involved in deadenylation-dependent decapping of mRNAs, leading to the degradation of mRNAs. Acts as a scaffold protein that connects deadenylation and decapping machinery. Required for cytoplasmic mRNA processing body (P-body) assembly. The sequence is that of Protein PAT1 homolog 1 (Patl1) from Rattus norvegicus (Rat).